Reading from the N-terminus, the 417-residue chain is Pygopus homolog 1 (417 aa).

Residues 1–11 (MSAEQDKEPIA) show a composition bias toward basic and acidic residues. 3 disordered regions span residues 1-71 (MSAE…AANP), 175-265 (HFRQ…MEDP), and 284-318 (ENSR…CTPD). The span at 18 to 27 (GDSGLDGLGG) shows a compositional bias: gly residues. The short motif at 35 to 41 (PDKKKRK) is the Nuclear localization signal element. Polar residues-rich tracts occupy residues 180–221 (SAEN…TNHS), 240–256 (DFTQ…SSTH), and 284–305 (ENSR…QNKP). A PHD-type zinc finger spans residues 338-396 (VYPCGICTNEVNDDQDAILCEASCQKWFHRICTGMTETAYGLLTAEASAVWGCDTCMAD). The interval 339 to 386 (YPCGICTNEVNDDQDAILCEASCQKWFHRICTGMTETAYGLLTAEASA) is interaction with H3K4me2. An interaction with BCL9 region spans residues 371–389 (GMTETAYGLLTAEASAVWG).

Interacts with BCL9 via The PHD-type zinc finger motiv, and thereby becomes part of the nuclear beta-catenin/TCF complex. Found in a complex with BCL9L, CDC73, CTNNB1 and PYGO1. Interacts with histone H3 mono-, di- or tri-methylated at 'Lys4' (H3K4me1, H3K4me2, H3K4me3); the interaction is enhanced by the interaction with BCL9.

The protein localises to the nucleus. Its function is as follows. Involved in signal transduction through the Wnt pathway. This is Pygopus homolog 1 (Pygo1) from Mus musculus (Mouse).